We begin with the raw amino-acid sequence, 94 residues long: MASGQEKGRSELDSLAREGQTVVPGGTGGKSYEAQEKLAEGRSRGGQTRKEQMGEEGYSEMGRKGGLSTNDESGGERAAREGIDIDESKFKTKS.

Basic and acidic residues-rich tracts occupy residues 1 to 16 (MASGQEKGRSELDSLA), 33 to 53 (EAQEKLAEGRSRGGQTRKEQM), and 74 to 94 (GGERAAREGIDIDESKFKTKS). Residues 1 to 94 (MASGQEKGRS…IDESKFKTKS (94 aa)) form a disordered region.

This sequence belongs to the small hydrophilic plant seed protein family.

Its function is as follows. It is thought to provide protection for the cytoplasm during the desiccation stage of embryo development. The protein is Em protein CS41 (EM) of Triticum aestivum (Wheat).